The primary structure comprises 464 residues: Protein phosphatase 2C homolog 2 (464 aa).

The 270-residue stretch at 23–292 (AFGLCAMQGW…DNMSIVVVAL (270 aa)) folds into the PPM-type phosphatase domain. Aspartate 62, glycine 63, aspartate 234, and aspartate 283 together coordinate Mn(2+). An interaction with IRE1 region spans residues 174–355 (DGFVEMDRVN…KPQDKFTRDH (182 aa)). Disordered regions lie at residues 361–398 (SVTA…TSGP) and 434–464 (QLLQ…SHLQ). The span at 366–384 (DNDDPMDIDDTDADTDAEN) shows a compositional bias: acidic residues. Residues threonine 376 and threonine 380 each carry the phosphothreonine modification. Over residues 386–396 (DPSSQSKSKTS) the composition is skewed to polar residues. Basic and acidic residues predominate over residues 448–458 (PENDSNTDHKA).

The protein belongs to the PP2C family. In terms of assembly, interacts with IRE1 (when phosphorylated); the interaction is direct and serves to attenuate the endoplasmic reticulum unfolded protein response. Interacts (when phosphorylated) with RAD53 (via domain FHA 1); the interaction is direct and serves to regulate DNA damage checkpoint signaling. Interacts with the ATG17-ATG29-ATG31 and ATG1-ATG13 supercomplex; to regulate induction of autophagy. Requires Mg(2+) as cofactor. It depends on Mn(2+) as a cofactor.

The protein resides in the nucleus. It is found in the cytoplasm. It localises to the cytosol. It carries out the reaction O-phospho-L-seryl-[protein] + H2O = L-seryl-[protein] + phosphate. The catalysed reaction is O-phospho-L-threonyl-[protein] + H2O = L-threonyl-[protein] + phosphate. Its function is as follows. Dephosphorylating regulator for many key proteins. Dephosphorylates the cell cycle master regulator CDC28/cyclin-dependent kinase 1; its activity appears redundant with phosphatase PTC3. Dephosphorylates HOG1 at 'Thr-171', to attenuate activation of the stress-activated p38MAPK cascade; its activity appears redundant with phosphatase PTC3. Positively regulates both nonselective macroautophagy as well as the selective cytoplasm-to-vacuole (cvt) autophagy pathway and the genotoxin-induced targeted autophagy (GTA) pathway, possibly by dephosphorylating ATG13 to enable the interaction between the ATG17-ATG29-ATG31 and ATG1-ATG13 complexes; its activity appears redundant with phosphatase PTC3. Dephosphorylates RAD53, to regulate DNA damage checkpoint signaling. Dephosphorylates IRE1, to negatively regulate the endoplasmic reticulum unfolded protein response. The sequence is that of Protein phosphatase 2C homolog 2 (PTC2) from Saccharomyces cerevisiae (strain ATCC 204508 / S288c) (Baker's yeast).